The primary structure comprises 574 residues: 5'-nucleotidase (574 aa).

Positions 1–26 are cleaved as a signal peptide; sequence MCPRAARAPATLLLALGAVLWPAAGA. Residues Asp-36 and His-38 each contribute to the Zn(2+) site. An intrachain disulfide couples Cys-51 to Cys-57. An N-linked (GlcNAc...) asparagine glycan is attached at Asn-53. Positions 85, 117, 220, and 243 each coordinate Zn(2+). Residues Asn-311 and Asn-333 are each glycosylated (N-linked (GlcNAc...) asparagine). 2 disulfide bridges follow: Cys-353–Cys-358 and Cys-365–Cys-387. Arg-354 serves as a coordination point for AMP. Arg-354 provides a ligand contact to IMP. Residues Asn-390 and Arg-395 each contribute to the AMP site. Asn-390 and Arg-395 together coordinate IMP. The N-linked (GlcNAc...) asparagine glycan is linked to Asn-403. AMP is bound at residue Phe-417. Phe-417 lines the IMP pocket. Residues Cys-476 and Cys-479 are joined by a disulfide bond. The AMP site is built by Phe-500 and Asp-506. IMP-binding residues include Phe-500 and Asp-506. Ser-549 carries the GPI-anchor amidated serine lipid modification. The propeptide at 550–574 is removed in mature form; sequence TGSHCHGSFSLIFLSLWAVIFVLYQ.

It belongs to the 5'-nucleotidase family. As to quaternary structure, homodimer. Requires Zn(2+) as cofactor.

Its subcellular location is the cell membrane. It carries out the reaction a ribonucleoside 5'-phosphate + H2O = a ribonucleoside + phosphate. It catalyses the reaction a 2'-deoxyribonucleoside 5'-phosphate + H2O = a 2'-deoxyribonucleoside + phosphate. The catalysed reaction is dTMP + H2O = thymidine + phosphate. The enzyme catalyses CMP + H2O = cytidine + phosphate. It carries out the reaction IMP + H2O = inosine + phosphate. It catalyses the reaction AMP + H2O = adenosine + phosphate. The catalysed reaction is GMP + H2O = guanosine + phosphate. The enzyme catalyses UMP + H2O = uridine + phosphate. It carries out the reaction dAMP + H2O = 2'-deoxyadenosine + phosphate. It catalyses the reaction dCMP + H2O = 2'-deoxycytidine + phosphate. Its activity is regulated as follows. Inhibited by adenosine 5'-(alpha,beta-methylene)-diphosphate (AMPCP). Catalyzes the hydrolysis of nucleotide monophosphates, releasing inorganic phosphate and the corresponding nucleoside, with AMP being the preferred substrate. Shows a preference for ribonucleotide monophosphates over their equivalent deoxyribose forms. Other substrates include IMP, UMP, GMP, CMP, dAMP, dCMP, dTMP, NAD and NMN. This chain is 5'-nucleotidase (NT5E), found in Homo sapiens (Human).